Consider the following 621-residue polypeptide: E3 SUMO-protein ligase PIAS2 (621 aa).

One can recognise an SAP domain in the interval 11–45; it reads VSSFRVSELQVLLGFAGRNKSGRKHDLLMRALHLL. Residues 19–23 carry the LXXLL motif motif; the sequence is LQVLL. Residues Lys46 and Lys249 each participate in a glycyl lysine isopeptide (Lys-Gly) (interchain with G-Cter in SUMO2) cross-link. The region spanning 134-299 is the PINIT domain; sequence QPSPPIPPVH…SMSVYLVRQL (166 aa). The SP-RING-type zinc finger occupies 331–412; sequence PDSEIATTSL…FMEILNDCSD (82 aa). Residues Cys362, His364, Cys385, and Cys388 each contribute to the Zn(2+) site. Residues Lys430, Lys435, Lys443, and Lys452 each participate in a glycyl lysine isopeptide (Lys-Gly) (interchain with G-Cter in SUMO2) cross-link. Residues 467–473 form an SUMO1-binding region; sequence VDVIDLT. 3 positions are modified to phosphoserine: Ser476, Ser477, and Ser478. The short motif at 484–492 is the Nuclear localization signal element; sequence PPAKRKCIF. Lys489 is covalently cross-linked (Glycyl lysine isopeptide (Lys-Gly) (interchain with G-Cter in SUMO2)). Ser499 carries the phosphoserine modification. Glycyl lysine isopeptide (Lys-Gly) (interchain with G-Cter in SUMO2) cross-links involve residues Lys502 and Gln562. The span at 579–610 shows a compositional bias: low complexity; that stretch reads SSTSVTTTSSHESSTHVSSSSSRSETGVITSS. The tract at residues 579–621 is disordered; the sequence is SSTSVTTTSSHESSTHVSSSSSRSETGVITSSGSNIPDIISLD.

Belongs to the PIAS family. As to quaternary structure, binds SUMO1 and UBE2I. Interacts with AXIN1, JUN, MDM2, PARK7, TP53 and TP73 isoform alpha, but not TP73 isoform beta. Interacts with STAT4 following IL12 and IFN-alpha stimulation of T-cells. Interacts also with GTF2I, GTF2IRD1, IKFZ1, DAB2 and MSX2, as well as with several steroid receptors, including ESR1, ESR2, NR3C1, PGR, AR, and with NCOA2. Sumoylation of a target protein seems to enhance the interaction. Binds to sumoylated ELK1. Binds DNA, such as CDKN1A promoter, in a sequence-specific manner. Interacts with PLAG1. Interacts with KLF8; the interaction results in SUMO ligation and repression of KLF8 transcriptional activity and of its cell cycle progression into G(1) phase. PIAS2-beta interacts with IFIH1/MDA5. Isoform PIAS2-alpha interacts with PML (isoform PML-12). Interacts with PRDM1/Blimp-1. In terms of processing, sumoylated. Mainly expressed in testis. Isoform 3 is expressed predominantly in adult testis, weakly in pancreas, embryonic testis and sperm, and at very low levels in other organs.

The protein resides in the nucleus speckle. It localises to the nucleus. Its subcellular location is the PML body. It functions in the pathway protein modification; protein sumoylation. Functions as an E3-type small ubiquitin-like modifier (SUMO) ligase, stabilizing the interaction between UBE2I and the substrate, and as a SUMO-tethering factor. Plays a crucial role as a transcriptional coregulator in various cellular pathways, including the STAT pathway, the p53 pathway and the steroid hormone signaling pathway. The effects of this transcriptional coregulation, transactivation or silencing may vary depending upon the biological context and the PIAS2 isoform studied. However, it seems to be mostly involved in gene silencing. Binds to sumoylated ELK1 and enhances its transcriptional activity by preventing recruitment of HDAC2 by ELK1, thus reversing SUMO-mediated repression of ELK1 transactivation activity. Isoform PIAS2-beta, but not isoform PIAS2-alpha, promotes MDM2 sumoylation. Isoform PIAS2-alpha promotes PARK7 sumoylation. Isoform PIAS2-beta promotes NCOA2 sumoylation more efficiently than isoform PIAS2-alpha. Isoform PIAS2-alpha sumoylates PML at'Lys-65' and 'Lys-160'. In Homo sapiens (Human), this protein is E3 SUMO-protein ligase PIAS2 (PIAS2).